The sequence spans 201 residues: Chromophore lyase CpcT/CpeT (201 aa).

Belongs to the CpcT/CpeT biliprotein lyase family.

It is found in the plastid. Its subcellular location is the organellar chromatophore. Covalently attaches a chromophore to Cys residue(s) of phycobiliproteins. The protein is Chromophore lyase CpcT/CpeT of Paulinella chromatophora.